Here is a 412-residue protein sequence, read N- to C-terminus: Lysosomal phospholipase A and acyltransferase (412 aa).

An N-terminal signal peptide occupies residues 1-33 (MDRHLCTCRETQLRSGLLLPLFLLMMLADLTLP). Residue D46 participates in substrate binding. A disulfide bond links C65 and C89. The N-linked (GlcNAc...) asparagine glycan is linked to N99. S198 acts as the Acyl-ester intermediate in catalysis. S198 is a Zn(2+) binding site. A substrate-binding site is contributed by M199. N-linked (GlcNAc...) asparagine glycans are attached at residues N273 and N289. C355 provides a ligand contact to Zn(2+). Active-site charge relay system residues include D360 and H392. H392 is a binding site for Zn(2+). An N-linked (GlcNAc...) asparagine glycan is attached at N398.

It belongs to the AB hydrolase superfamily. Lipase family. In terms of processing, N-glycosylated. N-glycosylation is important for maturation of the enzyme and normal subcellular location. As to expression, detected in blood plasma. Detected in alveolar macrophages (at protein level). Detected in heart, liver, spleen, kidney, thymus, brain and lung.

The protein localises to the secreted. It is found in the lysosome. It localises to the membrane. It carries out the reaction a 1,2-diacyl-sn-glycero-3-phosphocholine + H2O = a 2-acyl-sn-glycero-3-phosphocholine + a fatty acid + H(+). The enzyme catalyses 1-hexadecanoyl-2-(9Z-octadecenoyl)-sn-glycero-3-phosphocholine + H2O = 2-(9Z-octadecenoyl)-sn-glycero-3-phosphocholine + hexadecanoate + H(+). The catalysed reaction is 1,2-di-(9Z-octadecenoyl)-sn-glycero-3-phosphocholine + H2O = 2-(9Z-octadecenoyl)-sn-glycero-3-phosphocholine + (9Z)-octadecenoate + H(+). It catalyses the reaction 1-hexadecanoyl-2-glutaroyl-sn-glycero-3-phosphocholine + H2O = 2-glutaroyl-sn-glycero-3-phosphocholine + hexadecanoate + H(+). It carries out the reaction 1-hexadecanoyl-2-nonadioyl-sn-glycero-3-phosphocholine + H2O = 2-nonadioyl-sn-glycero-3-phosphocholine + hexadecanoate + H(+). The enzyme catalyses 1-hexadecanoyl-2-(5-oxopentanoyl)-sn-glycero-3-phosphocholine + H2O = 2-(5-oxopentanoyl)-sn-glycero-3-phosphocholine + hexadecanoate + H(+). The catalysed reaction is 1-hexadecanoyl-2-(9-oxononanoyl)-sn-glycero-3-phosphocholine + H2O = 2-(9-oxononanoyl)-sn-glycero-3-phosphocholine + hexadecanoate + H(+). It catalyses the reaction 1,2-dihexadecanoyl-sn-glycero-3-phosphocholine + H2O = 2-hexadecanoyl-sn-glycero-3-phosphocholine + hexadecanoate + H(+). It carries out the reaction a 1,2-diacyl-sn-glycero-3-phosphocholine + H2O = a 1-acyl-sn-glycero-3-phosphocholine + a fatty acid + H(+). The enzyme catalyses 1-hexadecanoyl-2-(9Z-octadecenoyl)-sn-glycero-3-phosphocholine + H2O = 1-hexadecanoyl-sn-glycero-3-phosphocholine + (9Z)-octadecenoate + H(+). The catalysed reaction is 1,2-di-(9Z-octadecenoyl)-sn-glycero-3-phosphocholine + H2O = 1-(9Z-octadecenoyl)-sn-glycero-3-phosphocholine + (9Z)-octadecenoate + H(+). It catalyses the reaction 1,2-dihexadecanoyl-sn-glycero-3-phosphocholine + H2O = 1-hexadecanoyl-sn-glycero-3-phosphocholine + hexadecanoate + H(+). It carries out the reaction a 1-acyl-sn-glycero-3-phosphocholine + H2O = sn-glycerol 3-phosphocholine + a fatty acid + H(+). The enzyme catalyses 1-hexadecanoyl-sn-glycero-3-phosphocholine + H2O = sn-glycerol 3-phosphocholine + hexadecanoate + H(+). The catalysed reaction is N-(acetyl)-sphing-4-enine + a 1,2-diacyl-sn-glycero-3-phosphoethanolamine = 1-O-acyl-N-(acetyl)-sphing-4-enine + a 2-acyl-sn-glycero-3-phosphoethanolamine. It catalyses the reaction 1-hexadecanoyl-2-(9Z-octadecenoyl)-sn-glycero-3-phosphoethanolamine + N-(acetyl)-sphing-4-enine = 2-(9Z-octadecenoyl)-sn-glycero-3-phosphoethanolamine + 1-hexadecanoyl-N-(acetyl)-sphing-4-enine. It carries out the reaction 1-hexadecanoyl-2-(9Z,12Z-octadecadienoyl)-sn-glycero-3-phosphoethanolamine + N-(acetyl)-sphing-4-enine = 2-(9Z,12Z)-octadecadienoyl-sn-glycero-3-phosphoethanolamine + 1-hexadecanoyl-N-(acetyl)-sphing-4-enine. The enzyme catalyses 1-hexadecanoyl-2-(5Z,8Z,11Z,14Z-eicosatetraenoyl)-sn-glycero-3-phosphoethanolamine + N-(acetyl)-sphing-4-enine = 2-(5Z,8Z,11Z,14Z)-eicosatetraenoyl-sn-glycero-3-phosphoethanolamine + 1-hexadecanoyl-N-(acetyl)-sphing-4-enine. The catalysed reaction is N-(acetyl)-sphing-4-enine + a 1,2-diacyl-sn-glycero-3-phosphoethanolamine = 1-O-acyl-N-(acetyl)-sphing-4-enine + a 1-acyl-sn-glycero-3-phosphoethanolamine. It catalyses the reaction 1-hexadecanoyl-2-(9Z-octadecenoyl)-sn-glycero-3-phosphoethanolamine + N-(acetyl)-sphing-4-enine = 1-(9Z-octadecenoyl)-N-(acetyl)-sphing-4-enine + 1-hexadecanoyl-sn-glycero-3-phosphoethanolamine. It carries out the reaction 1-hexadecanoyl-2-(9Z,12Z-octadecadienoyl)-sn-glycero-3-phosphoethanolamine + N-(acetyl)-sphing-4-enine = 1-(9Z,12Z-octadecadienoyl)-N-acetylsphing-4-enine + 1-hexadecanoyl-sn-glycero-3-phosphoethanolamine. The enzyme catalyses 1-hexadecanoyl-2-(5Z,8Z,11Z,14Z-eicosatetraenoyl)-sn-glycero-3-phosphoethanolamine + N-(acetyl)-sphing-4-enine = 1-(5Z,8Z,11Z,14Z)-eicosatetraenoyl-N-(acetyl)-sphing-4-enine + 1-hexadecanoyl-sn-glycero-3-phosphoethanolamine. The catalysed reaction is N-(acetyl)-sphing-4-enine + a 1,2-diacyl-sn-glycero-3-phosphocholine = 1-O-acyl-N-(acetyl)-sphing-4-enine + a 2-acyl-sn-glycero-3-phosphocholine. It catalyses the reaction 1-hexadecanoyl-2-(9Z-octadecenoyl)-sn-glycero-3-phosphocholine + N-(acetyl)-sphing-4-enine = 1-hexadecanoyl-N-(acetyl)-sphing-4-enine + 2-(9Z-octadecenoyl)-sn-glycero-3-phosphocholine. It carries out the reaction 1-hexadecanoyl-2-(9Z,12Z-octadecadienoyl)-sn-glycero-3-phosphocholine + N-(acetyl)-sphing-4-enine = 2-(9Z,12Z-octadecadienoyl)-sn-glycero-3-phosphocholine + 1-hexadecanoyl-N-(acetyl)-sphing-4-enine. The enzyme catalyses 1-hexadecanoyl-2-(5Z,8Z,11Z,14Z-eicosatetraenoyl)-sn-glycero-3-phosphocholine + N-(acetyl)-sphing-4-enine = 1-hexadecanoyl-N-(acetyl)-sphing-4-enine + 2-(5Z,8Z,11Z,14Z)-eicosatetraenoyl-sn-glycero-3-phosphocholine. The catalysed reaction is 1-hexadecanoyl-2-(4Z,7Z,10Z,13Z,16Z,19Z-docosahexaenoyl)-sn-glycero-3-phosphocholine + N-(acetyl)-sphing-4-enine = 2-(4Z,7Z,10Z,13Z,16Z,19Z-docosahexaenoyl)-sn-glycero-3-phosphocholine + 1-hexadecanoyl-N-(acetyl)-sphing-4-enine. It catalyses the reaction 1-hexadecanoyl-2-nonadioyl-sn-glycero-3-phosphocholine + N-(acetyl)-sphing-4-enine = 2-nonadioyl-sn-glycero-3-phosphocholine + 1-hexadecanoyl-N-(acetyl)-sphing-4-enine. It carries out the reaction 1-octadecanoyl-2-(9Z-octadecenoyl)-sn-glycero-3-phosphocholine + N-(acetyl)-sphing-4-enine = 1-octadecanoyl-N-(acetyl)-sphing-4-enine + 2-(9Z-octadecenoyl)-sn-glycero-3-phosphocholine. The enzyme catalyses 1-(9Z)-octadecenoyl-2-octadecanoyl-sn-glycero-3-phosphocholine + N-(acetyl)-sphing-4-enine = 2-octadecanoyl-sn-glycero-3-phosphocholine + 1-(9Z-octadecenoyl)-N-(acetyl)-sphing-4-enine. The catalysed reaction is 1-octadecanoyl-2-(5Z,8Z,11Z,14Z-eicosatetraenoyl)-sn-glycero-3-phosphocholine + N-(acetyl)-sphing-4-enine = 1-octadecanoyl-N-(acetyl)-sphing-4-enine + 2-(5Z,8Z,11Z,14Z)-eicosatetraenoyl-sn-glycero-3-phosphocholine. It catalyses the reaction 1-(9Z-octadecenoyl)-2-hexadecanoyl-sn-glycero-3-phosphocholine + N-(acetyl)-sphing-4-enine = 1-(9Z-octadecenoyl)-N-(acetyl)-sphing-4-enine + 2-hexadecanoyl-sn-glycero-3-phosphocholine. It carries out the reaction N-(acetyl)-sphing-4-enine + a 1,2-diacyl-sn-glycero-3-phosphocholine = 1-O-acyl-N-(acetyl)-sphing-4-enine + a 1-acyl-sn-glycero-3-phosphocholine. The enzyme catalyses 1-hexadecanoyl-2-(9Z-octadecenoyl)-sn-glycero-3-phosphocholine + N-(acetyl)-sphing-4-enine = 1-(9Z-octadecenoyl)-N-(acetyl)-sphing-4-enine + 1-hexadecanoyl-sn-glycero-3-phosphocholine. The catalysed reaction is 1-hexadecanoyl-2-(9Z,12Z-octadecadienoyl)-sn-glycero-3-phosphocholine + N-(acetyl)-sphing-4-enine = 1-(9Z,12Z-octadecadienoyl)-N-acetylsphing-4-enine + 1-hexadecanoyl-sn-glycero-3-phosphocholine. It catalyses the reaction 1-hexadecanoyl-2-(5Z,8Z,11Z,14Z-eicosatetraenoyl)-sn-glycero-3-phosphocholine + N-(acetyl)-sphing-4-enine = 1-(5Z,8Z,11Z,14Z)-eicosatetraenoyl-N-(acetyl)-sphing-4-enine + 1-hexadecanoyl-sn-glycero-3-phosphocholine. It carries out the reaction 1-hexadecanoyl-2-(4Z,7Z,10Z,13Z,16Z,19Z-docosahexaenoyl)-sn-glycero-3-phosphocholine + N-(acetyl)-sphing-4-enine = 1-(4Z,7Z,10Z,13Z,16Z,19Z-docosahexaenoyl)-N-(acetyl)-sphing-4-enine + 1-hexadecanoyl-sn-glycero-3-phosphocholine. The enzyme catalyses 1-octadecanoyl-2-(9Z-octadecenoyl)-sn-glycero-3-phosphocholine + N-(acetyl)-sphing-4-enine = 1-(9Z-octadecenoyl)-N-(acetyl)-sphing-4-enine + 1-octadecanoyl-sn-glycero-3-phosphocholine. The catalysed reaction is 1-octadecanoyl-2-(9Z,12Z)-octadecadienoyl-sn-glycero-3-phosphocholine + N-(acetyl)-sphing-4-enine = 1-(9Z,12Z-octadecadienoyl)-N-acetylsphing-4-enine + 1-octadecanoyl-sn-glycero-3-phosphocholine. It catalyses the reaction 1-(9Z-octadecenoyl)-2-hexadecanoyl-sn-glycero-3-phosphocholine + N-(acetyl)-sphing-4-enine = 1-hexadecanoyl-N-(acetyl)-sphing-4-enine + 1-(9Z-octadecenoyl)-sn-glycero-3-phosphocholine. It carries out the reaction 1-(9Z)-octadecenoyl-2-octadecanoyl-sn-glycero-3-phosphocholine + N-(acetyl)-sphing-4-enine = 1-octadecanoyl-N-(acetyl)-sphing-4-enine + 1-(9Z-octadecenoyl)-sn-glycero-3-phosphocholine. The enzyme catalyses 1,2-di-(9Z-octadecenoyl)-sn-glycero-3-phosphocholine + N-(acetyl)-sphing-4-enine = 1-(9Z-octadecenoyl)-N-(acetyl)-sphing-4-enine + 1-(9Z-octadecenoyl)-sn-glycero-3-phosphocholine. The catalysed reaction is 1-octadecanoyl-2-(5Z,8Z,11Z,14Z-eicosatetraenoyl)-sn-glycero-3-phosphocholine + N-(acetyl)-sphing-4-enine = 1-(5Z,8Z,11Z,14Z)-eicosatetraenoyl-N-(acetyl)-sphing-4-enine + 1-octadecanoyl-sn-glycero-3-phosphocholine. It catalyses the reaction a 1,2-diacyl-sn-glycero-3-phospho-L-serine + N-(acetyl)-sphing-4-enine = a 2-acyl-sn-glycero-3-phospho-L-serine + 1-O-acyl-N-(acetyl)-sphing-4-enine. It carries out the reaction 1-octadecanoyl-2-(9Z-octadecenoyl)-sn-glycero-3-phospho-L-serine + N-(acetyl)-sphing-4-enine = 2-(9Z-octadecenoyl)-sn-glycero-3-phospho-L-serine + 1-octadecanoyl-N-(acetyl)-sphing-4-enine. The enzyme catalyses a 1,2-diacyl-sn-glycero-3-phospho-L-serine + N-(acetyl)-sphing-4-enine = 1-O-acyl-N-(acetyl)-sphing-4-enine + a 1-acyl-sn-glycero-3-phospho-L-serine. The catalysed reaction is 1-octadecanoyl-2-(9Z-octadecenoyl)-sn-glycero-3-phospho-L-serine + N-(acetyl)-sphing-4-enine = 1-octadecanoyl-sn-glycero-3-phosphoserine + 1-(9Z-octadecenoyl)-N-(acetyl)-sphing-4-enine. It catalyses the reaction a 1,2-diacyl-sn-glycero-3-phospho-(1'-sn-glycerol) + N-(acetyl)-sphing-4-enine = 2-acyl-sn-glycero-3-phospho-(1'-sn-glycerol) + 1-O-acyl-N-(acetyl)-sphing-4-enine. It carries out the reaction 1-octadecanoyl-2-(9Z-octadecenoyl)-sn-glycero-3-phospho-(1'-sn-glycerol) + N-(acetyl)-sphing-4-enine = 2-(9Z-octadecenoyl)-sn-glycero-3-phospho-(1'-sn-glycerol) + 1-octadecanoyl-N-(acetyl)-sphing-4-enine. The enzyme catalyses a 1,2-diacyl-sn-glycero-3-phospho-(1'-sn-glycerol) + N-(acetyl)-sphing-4-enine = 1-O-acyl-N-(acetyl)-sphing-4-enine + 1-acyl-sn-glycero-3-phospho-(1'-sn-glycerol). The catalysed reaction is 1-octadecanoyl-2-(9Z-octadecenoyl)-sn-glycero-3-phospho-(1'-sn-glycerol) + N-(acetyl)-sphing-4-enine = 1-octadecanoyl-sn-glycero-3-phospho-(1'-sn-glycerol) + 1-(9Z-octadecenoyl)-N-(acetyl)-sphing-4-enine. It catalyses the reaction an N-acylethanolamine + a 1,2-diacyl-sn-glycero-3-phosphocholine = 2-(acylamino)ethyl fatty acid + a 2-acyl-sn-glycero-3-phosphocholine. It carries out the reaction an N-acylethanolamine + a 1,2-diacyl-sn-glycero-3-phosphocholine = 2-(acylamino)ethyl fatty acid + a 1-acyl-sn-glycero-3-phosphocholine. The enzyme catalyses N-(5Z,8Z,11Z,14Z-eicosatetraenoyl)-ethanolamine + 1,2-di-(9Z-octadecenoyl)-sn-glycero-3-phosphocholine = 2-[(5Z,8Z,11Z,14Z)-eicosatetraenoylamino]ethyl (9Z)-octadecenoate + (9Z-octadecenoyl)-sn-glycero-3-phosphocholine. The catalysed reaction is N-(9Z-octadecenoyl) ethanolamine + 1,2-di-(9Z-octadecenoyl)-sn-glycero-3-phosphocholine = 2-[(9Z)-octadecenoylamino]ethyl (9Z)-octadecenoate + (9Z-octadecenoyl)-sn-glycero-3-phosphocholine. It catalyses the reaction a 3-acyl-sn-glycerol + a 1,2-diacyl-sn-glycero-3-phosphocholine = a 1,3-diacylglycerol + a 1-acyl-sn-glycero-3-phosphocholine. It carries out the reaction a 3-acyl-sn-glycerol + a 1,2-diacyl-sn-glycero-3-phosphocholine = a 1,3-diacylglycerol + a 2-acyl-sn-glycero-3-phosphocholine. The enzyme catalyses 3-(9Z-octadecenoyl)-sn-glycerol + 1,2-di-(9Z-octadecenoyl)-sn-glycero-3-phosphocholine = 1,3-di-(9Z-octadecenoyl)-glycerol + (9Z-octadecenoyl)-sn-glycero-3-phosphocholine. The catalysed reaction is 3-hexadecanoyl-sn-glycerol + 1,2-di-(9Z-octadecenoyl)-sn-glycero-3-phosphocholine = 1-(9Z)-octadecenoyl-3-hexadecanoyl-sn-glycerol + (9Z-octadecenoyl)-sn-glycero-3-phosphocholine. It catalyses the reaction a 1-acyl-sn-glycerol + a 1,2-diacyl-sn-glycero-3-phosphocholine = a 1,3-diacylglycerol + a 2-acyl-sn-glycero-3-phosphocholine. It carries out the reaction a 1-acyl-sn-glycerol + a 1,2-diacyl-sn-glycero-3-phosphocholine = a 1,3-diacylglycerol + a 1-acyl-sn-glycero-3-phosphocholine. The enzyme catalyses 1-(9Z-octadecenoyl)-sn-glycerol + 1,2-di-(9Z-octadecenoyl)-sn-glycero-3-phosphocholine = 1,3-di-(9Z-octadecenoyl)-glycerol + (9Z-octadecenoyl)-sn-glycero-3-phosphocholine. The catalysed reaction is 1-hexadecanoyl-sn-glycerol + 1,2-di-(9Z-octadecenoyl)-sn-glycero-3-phosphocholine = 1-hexadecanoyl-3-(9Z)-octadecenoyl-sn-glycerol + (9Z-octadecenoyl)-sn-glycero-3-phosphocholine. It catalyses the reaction a 2-acylglycerol + a 1,2-diacyl-sn-glycero-3-phosphocholine = a 1,2-diacylglycerol + a 2-acyl-sn-glycero-3-phosphocholine. It carries out the reaction a 2-acylglycerol + a 1,2-diacyl-sn-glycero-3-phosphocholine = a 1,2-diacylglycerol + a 1-acyl-sn-glycero-3-phosphocholine. The enzyme catalyses 2-hexadecanoylglycerol + 1,2-di-(9Z-octadecenoyl)-sn-glycero-3-phosphocholine = 1-(9Z)-octadecenoyl-2-hexadecanoylglycerol + (9Z-octadecenoyl)-sn-glycero-3-phosphocholine. The catalysed reaction is 1-O-alkylglycerol + a 1,2-diacyl-sn-glycero-3-phosphocholine = 1-O-alkyl-3-acylglycerol + a 1-acyl-sn-glycero-3-phosphocholine. It catalyses the reaction 1-O-alkylglycerol + a 1,2-diacyl-sn-glycero-3-phosphocholine = 1-O-alkyl-3-acylglycerol + a 2-acyl-sn-glycero-3-phosphocholine. It carries out the reaction 1-O-hexadecylglycerol + 1,2-di-(9Z-octadecenoyl)-sn-glycero-3-phosphocholine = 1-O-hexadecyl-3-(9Z)-octadecenoylglycerol + (9Z-octadecenoyl)-sn-glycero-3-phosphocholine. The enzyme catalyses 1-O-alkyl-2-acyl-sn-glycerol + a 1,2-diacyl-sn-glycero-3-phosphocholine = 1-O-alkyl-2,3-diacyl-sn-glycerol + a 2-acyl-sn-glycero-3-phosphocholine. The catalysed reaction is 1-O-alkyl-2-acyl-sn-glycerol + a 1,2-diacyl-sn-glycero-3-phosphocholine = 1-O-alkyl-2,3-diacyl-sn-glycerol + a 1-acyl-sn-glycero-3-phosphocholine. It catalyses the reaction 1-O-hexadecyl-2-acetyl-sn-glycerol + 1,2-di-(9Z-octadecenoyl)-sn-glycero-3-phosphocholine = 1-O-hexadecyl-2-acetyl-3-(9Z)-octadecenoyl-sn-glycerol + (9Z-octadecenoyl)-sn-glycero-3-phosphocholine. It carries out the reaction 1-O-hexadecyl-2-O-methyl-sn-glycerol + 1,2-di-(9Z-octadecenoyl)-sn-glycero-3-phosphocholine = 1-O-hexadecyl-2-O-methyl-3-(9Z)-octadecenoyl-sn-glycerol + (9Z-octadecenoyl)-sn-glycero-3-phosphocholine. The enzyme catalyses a 1,2-diacyl-sn-glycero-3-phosphoethanolamine + H2O = a 1-acyl-sn-glycero-3-phosphoethanolamine + a fatty acid + H(+). The catalysed reaction is 1-acyl-2-(5Z,8Z,11Z,14Z)-eicosatetraenoyl-sn-glycero-3-phosphoethanolamine + H2O = a 1-acyl-sn-glycero-3-phosphoethanolamine + (5Z,8Z,11Z,14Z)-eicosatetraenoate + H(+). It catalyses the reaction a 1,2-diacyl-sn-glycero-3-phospho-(1'-sn-glycerol) + H2O = 1-acyl-sn-glycero-3-phospho-(1'-sn-glycerol) + a fatty acid + H(+). It carries out the reaction 1-hexadecanoyl-2-(9Z-octadecenoyl)-sn-glycero-3-phospho-(1'-sn-glycerol) + H2O = 1-hexadecanoyl-sn-glycero-3-phospho-(1'-sn-glycerol) + (9Z)-octadecenoate + H(+). The enzyme catalyses a 1,2-diacyl-sn-glycero-3-phospho-(1'-sn-glycerol) + H2O = 2-acyl-sn-glycero-3-phospho-(1'-sn-glycerol) + a fatty acid + H(+). The catalysed reaction is 1-hexadecanoyl-2-(9Z-octadecenoyl)-sn-glycero-3-phospho-(1'-sn-glycerol) + H2O = 2-(9Z-octadecenoyl)-sn-glycero-3-phospho-(1'-sn-glycerol) + hexadecanoate + H(+). Phospholipase sn-2 versus sn-1 positional specificity is affected by the phospholipid composition of membranes. Phospholipase A2 activity toward 1-hexadecanoyl-2-(5Z,8Z,11Z,14Z-eicosatetraenoyl)-sn-glycero-3-phosphocholine (PAPE) is enhanced in the presence of 1,2-dioleoyl-sn-glycero-3-phosphocholine (DOPC), which promotes lipid bilayer formation. O-acyltransferase activity is inhibited by antiarrhythmic drug amiodarone. Has dual calcium-independent phospholipase and O-acyltransferase activities with a potential role in glycerophospholipid homeostasis and remodeling of acyl groups of lipophilic alcohols present in acidic cellular compartments. Catalyzes hydrolysis of the ester bond of the fatty acyl group attached at sn-1 or sn-2 position of phospholipids (phospholipase A1 or A2 activity) and transfer it to the hydroxyl group at the first carbon of lipophilic alcohols (O-acyltransferase activity). Among preferred fatty acyl donors are phosphatidylcholines, phosphatidylethanolamines, phosphatidylglycerols and phosphatidylserines. Favors sn-2 over sn-1 deacylation of unsaturated fatty acyl groups of phosphatidylcholines, phosphatidylethanolamines, and phosphatidylglycerols. Among preferred fatty acyl acceptors are natural lipophilic alcohols including short-chain ceramide N-acetyl-sphingosine (C2 ceramide), alkylacylglycerols, monoacylglycerols, and acylethanolamides such as anandamide and oleoylethanolamide. Selectively hydrolyzes the sn-1 fatty acyl group of truncated oxidized phospholipids and may play a role in detoxification of reactive oxidized phospholipids during oxidative stress. Required for normal phospholipid degradation in alveolar macrophages with potential implications in the clearance of pulmonary surfactant, which is mainly composed of dipalmitoylphosphatidylcholine (1,2-dihexadecanoyl-sn-glycero-3-phosphocholine). Involved in the first step of bis(monoacylglycero)phosphate (BMP) de novo synthesis from phosphatidylglycerol (1,2-diacyl-sn-glycero-3-phospho-(1'-sn-glycerol), PG). BMP is an important player in cargo sorting and degradation, regulation of cellular cholesterol levels and intercellular communication. At neutral pH, hydrolyzes the sn-1 fatty acyl group of the lysophosphatidylcholines. This chain is Lysosomal phospholipase A and acyltransferase, found in Mus musculus (Mouse).